The primary structure comprises 631 residues: Probable G-protein coupled receptor 153 (631 aa).

At 1–11 (MSDERRLPSSA) the chain is on the extracellular side. A helical transmembrane segment spans residues 12 to 32 (VGWLACGGLSLLANAWGILSV). At 33 to 41 (GAKQKKWKP) the chain is on the cytoplasmic side. A helical membrane pass occupies residues 42-62 (LEFLLCTLAATHMLNVAVPIA). Over 63-84 (TYAVVQLRRQRPDYEWNEGLCK) the chain is Extracellular. A helical membrane pass occupies residues 85 to 105 (VFVSTFYTLTLATCFSVTSIS). Residues 106–126 (YHRMWMVRWPVNYRLSNAKKQ) are Cytoplasmic-facing. Residues 127-147 (AVHTVMGIWMVSFILSALPAV) traverse the membrane as a helical segment. Over 148-162 (GWHDTSERFYTHGCR) the chain is Extracellular. A helical membrane pass occupies residues 163-183 (FIVAEIGLGFGVCFLLLVGGS). Residues 184–243 (VAMGMVCTAIALFQTLATQVGHRADRRTFTVPTIVVEDAQGKRRSSIDGSEPARTSLQIT) lie on the Cytoplasmic side of the membrane. A helical transmembrane segment spans residues 244 to 264 (GLVATIVVIYDCLMGFPVLVV). The Extracellular segment spans residues 265-276 (SFSSLRADASAP). The helical transmembrane segment at 277 to 297 (WMALCVLWCSVTQALLLPLFL) threads the bilayer. Residues 298–631 (WTCDRYRADL…LHSDSLGSAS (334 aa)) are Cytoplasmic-facing. 3 disordered regions span residues 486–518 (LQPSSLDGGPRHAQDSPPGSPRRRPGPGARSAS), 546–590 (QPFP…SLSA), and 603–631 (CGSISSFLSSPSESSGYVTLHSDSLGSAS). A compositionally biased stretch (low complexity) spans 605–617 (SISSFLSSPSESS).

Belongs to the G-protein coupled receptor 1 family.

It is found in the cell membrane. Orphan receptor. The protein is Probable G-protein coupled receptor 153 (Gpr153) of Mus musculus (Mouse).